Reading from the N-terminus, the 509-residue chain is Bifunctional purine biosynthesis protein PurH (509 aa).

The region spanning 1–144 (MKRALISVSD…KNYAAVTVVV (144 aa)) is the MGS-like domain.

The protein belongs to the PurH family.

It carries out the reaction (6R)-10-formyltetrahydrofolate + 5-amino-1-(5-phospho-beta-D-ribosyl)imidazole-4-carboxamide = 5-formamido-1-(5-phospho-D-ribosyl)imidazole-4-carboxamide + (6S)-5,6,7,8-tetrahydrofolate. It catalyses the reaction IMP + H2O = 5-formamido-1-(5-phospho-D-ribosyl)imidazole-4-carboxamide. It participates in purine metabolism; IMP biosynthesis via de novo pathway; 5-formamido-1-(5-phospho-D-ribosyl)imidazole-4-carboxamide from 5-amino-1-(5-phospho-D-ribosyl)imidazole-4-carboxamide (10-formyl THF route): step 1/1. It functions in the pathway purine metabolism; IMP biosynthesis via de novo pathway; IMP from 5-formamido-1-(5-phospho-D-ribosyl)imidazole-4-carboxamide: step 1/1. This is Bifunctional purine biosynthesis protein PurH from Listeria monocytogenes serovar 1/2a (strain ATCC BAA-679 / EGD-e).